We begin with the raw amino-acid sequence, 515 residues long: tRNA-2-methylthio-N(6)-dimethylallyladenosine synthase (515 aa).

Residues 25-140 (KTYQVRTFGC…LPALLNRARH (116 aa)) form the MTTase N-terminal domain. Positions 34, 69, 103, 177, 181, and 184 each coordinate [4Fe-4S] cluster. The Radical SAM core domain maps to 163–393 (RDSVYAGWVS…TALQDRIAAE (231 aa)). A TRAM domain is found at 396 to 466 (AKQLGRKVEV…AFHLVADPAG (71 aa)). A disordered region spans residues 482-515 (DRSQADSCGVPAAGAASGKAGVSLGMPSLPTRRA). Over residues 490 to 506 (GVPAAGAASGKAGVSLG) the composition is skewed to low complexity.

Belongs to the methylthiotransferase family. MiaB subfamily. Monomer. Requires [4Fe-4S] cluster as cofactor.

The protein resides in the cytoplasm. The catalysed reaction is N(6)-dimethylallyladenosine(37) in tRNA + (sulfur carrier)-SH + AH2 + 2 S-adenosyl-L-methionine = 2-methylsulfanyl-N(6)-dimethylallyladenosine(37) in tRNA + (sulfur carrier)-H + 5'-deoxyadenosine + L-methionine + A + S-adenosyl-L-homocysteine + 2 H(+). In terms of biological role, catalyzes the methylthiolation of N6-(dimethylallyl)adenosine (i(6)A), leading to the formation of 2-methylthio-N6-(dimethylallyl)adenosine (ms(2)i(6)A) at position 37 in tRNAs that read codons beginning with uridine. This Paenarthrobacter aurescens (strain TC1) protein is tRNA-2-methylthio-N(6)-dimethylallyladenosine synthase.